Consider the following 373-residue polypeptide: Pollen allergen KBG 31 (373 aa).

Residues 1 to 28 form the signal peptide; sequence MDKANGAYKTALKAASAVAPAEKFPVFQ.

The protein belongs to the Poa p IX/Phl p VI allergen family. As to expression, pollen.

In Poa pratensis (Kentucky bluegrass), this protein is Pollen allergen KBG 31.